Reading from the N-terminus, the 680-residue chain is Leucine-rich repeat and calponin homology domain-containing protein 4 (680 aa).

A compositionally biased stretch (low complexity) spans 1-22; sequence MAAAVAGPLAAGGEEAAASVSL. Residues 1 to 35 form a disordered region; the sequence is MAAAVAGPLAAGGEEAAASVSLPGSPGLPGSRSAE. 9 LRR repeats span residues 41–64, 67–90, 92–113, 114–136, 138–158, 159–181, 182–204, 206–226, and 227–250; these read AVAT…AARS, LSDI…ACQL, SLEG…LGNL, TALT…ICQL, LRVL…ISTL, GSLR…LCSL, RSLR…LGDL, LVRL…FCRL, and RHLQ…CLKG. A phosphoserine mark is found at serine 279, serine 281, serine 304, serine 307, serine 309, and serine 313. The disordered stretch occupies residues 329–528; sequence SELARDPRGP…PSSPESVLRP (200 aa). Residues 330 to 345 are compositionally biased toward basic and acidic residues; the sequence is ELARDPRGPRQPREDG. A compositionally biased stretch (acidic residues) spans 346 to 355; the sequence is AGDGDLEQID. Basic and acidic residues-rich tracts occupy residues 357–371 and 385–418; these read IDSH…RSAA and DVEK…ERKQ. Residue serine 432 is modified to Phosphoserine. 2 stretches are compositionally biased toward low complexity: residues 440 to 453 and 510 to 528; these read AAGA…TQAT and RSSS…VLRP. 5 positions are modified to phosphoserine: serine 511, serine 513, serine 517, serine 521, and serine 586. The Calponin-homology (CH) domain maps to 531-644; sequence FPQEKELISQ…VLEAVILVGG (114 aa). A helical membrane pass occupies residues 655–675; that stretch reads GLGGFLLFYVVFMLLLYVVYT.

In terms of tissue distribution, widely expressed across tissues, with the most abundant expression in spleen, testes, thymus, intestine, and blood. Expressed in macrophages.

Its subcellular location is the cell membrane. Functionally, accessory protein that regulates signaling by multiple TLRs, acting as a broad-spanning regulator of the innate immune response. In macrophages, binds LPS and promotes proper docking of LPS in lipid raft membrane. May be required for lipid raft maintenance. This Mus musculus (Mouse) protein is Leucine-rich repeat and calponin homology domain-containing protein 4 (Lrch4).